The following is a 95-amino-acid chain: CRISPR-associated endoribonuclease Cas2 1 (95 aa).

Asp-8 serves as a coordination point for Mg(2+).

This sequence belongs to the CRISPR-associated endoribonuclease Cas2 protein family. In terms of assembly, homodimer, forms a heterotetramer with a Cas1 homodimer. Mg(2+) serves as cofactor.

Its function is as follows. CRISPR (clustered regularly interspaced short palindromic repeat), is an adaptive immune system that provides protection against mobile genetic elements (viruses, transposable elements and conjugative plasmids). CRISPR clusters contain sequences complementary to antecedent mobile elements and target invading nucleic acids. CRISPR clusters are transcribed and processed into CRISPR RNA (crRNA). Functions as a ssRNA-specific endoribonuclease. Involved in the integration of spacer DNA into the CRISPR cassette. The sequence is that of CRISPR-associated endoribonuclease Cas2 1 from Pyrobaculum aerophilum (strain ATCC 51768 / DSM 7523 / JCM 9630 / CIP 104966 / NBRC 100827 / IM2).